A 320-amino-acid chain; its full sequence is Variant surface glycoprotein ILTAT 1.2 (320 aa).

3 N-linked (GlcNAc...) asparagine glycosylation sites follow: Asn146, Asn282, and Asn295. The segment at 297–320 (TKATENGVPVAQTQTGGSETTTEK) is disordered. Positions 308–320 (QTQTGGSETTTEK) are enriched in low complexity.

It localises to the cell membrane. Functionally, VSG forms a coat on the surface of the parasite. The trypanosome evades the immune response of the host by expressing a series of antigenically distinct VSGs from an estimated 1000 VSG genes. The chain is Variant surface glycoprotein ILTAT 1.2 from Trypanosoma brucei brucei.